We begin with the raw amino-acid sequence, 238 residues long: ATP-dependent Clp protease ATP-binding subunit CLPT1, chloroplastic (238 aa).

A chloroplast-targeting transit peptide spans Met-1–Ala-64. In terms of domain architecture, Clp R spans Ile-83–Asp-228. Repeat regions lie at residues Trp-86–Ser-151 and Leu-163–Asp-228.

The protein belongs to the ClpA/ClpB family. As to quaternary structure, monomer and homodimer. Binds to the CLP3-6 ring (P-ring). The dimers monomerize before association to the P-ring. Component of the chloroplastic Clp protease core complex which consist of at least 16 proteins: CLPP4 (3 copies), CLPP5 (3 copies), CLPR4 (2 copies), ClpP1 (1 copy), CLPP6 (1 copy), CLPR2 (1 copy), CLPT1 (1 copy), CLPT2 (1 copy) and 3 copies of CLPP3 and/or CLPR1 and/or CLPR3. Interacts with CLPC2 and CLPD. Interacts with CPN21. No interactions with CLPS1.

It is found in the plastid. The protein localises to the chloroplast. Its function is as follows. Accessory protein regulating the assembly of the plastidial Clp protease system. CLPT1 first binds to the heptameric P-ring containing the CLP3-6 subunits followed by CLPT2, and only then does the P-ring combine with the R-ring composed of the clpP1 and CLPR1-4 subunits. Once the core complex is fully assembled, it then associates to the CLPC chaperone partner to form the functional protease. CLPT1 and CLPT2 are partially redundant. In Arabidopsis thaliana (Mouse-ear cress), this protein is ATP-dependent Clp protease ATP-binding subunit CLPT1, chloroplastic.